The primary structure comprises 286 residues: tRNA pseudouridine synthase B (286 aa).

The active-site Nucleophile is the aspartate 40.

This sequence belongs to the pseudouridine synthase TruB family. Type 1 subfamily.

It catalyses the reaction uridine(55) in tRNA = pseudouridine(55) in tRNA. In terms of biological role, responsible for synthesis of pseudouridine from uracil-55 in the psi GC loop of transfer RNAs. The protein is tRNA pseudouridine synthase B of Mesoplasma florum (strain ATCC 33453 / NBRC 100688 / NCTC 11704 / L1) (Acholeplasma florum).